Here is a 308-residue protein sequence, read N- to C-terminus: Ribonuclease HIII (308 aa).

Residues 91 to 308 (KNVIGSDEVG…TEKALKMVKK (218 aa)) enclose the RNase H type-2 domain. A divalent metal cation is bound by residues aspartate 97, glutamate 98, and aspartate 202.

This sequence belongs to the RNase HII family. RnhC subfamily. Requires Mn(2+) as cofactor. It depends on Mg(2+) as a cofactor.

It is found in the cytoplasm. It carries out the reaction Endonucleolytic cleavage to 5'-phosphomonoester.. Endonuclease that specifically degrades the RNA of RNA-DNA hybrids. The chain is Ribonuclease HIII from Listeria monocytogenes serovar 1/2a (strain ATCC BAA-679 / EGD-e).